Here is a 320-residue protein sequence, read N- to C-terminus: Mitochondrial ribosome-associated GTPase 1 (320 aa).

The CP-type G domain occupies 37–209 (LKQMRASPRK…LLDTPGVLPP (173 aa)). GTP is bound by residues 81 to 84 (NKMD), 153 to 158 (NVGKSS), and Gly-205.

The protein belongs to the TRAFAC class YlqF/YawG GTPase family. MTG1 subfamily.

It localises to the mitochondrion inner membrane. Plays a role in the regulation of the mitochondrial ribosome assembly and of translational activity. Displays mitochondrial GTPase activity. In Ictalurus punctatus (Channel catfish), this protein is Mitochondrial ribosome-associated GTPase 1.